A 220-amino-acid polypeptide reads, in one-letter code: Deoxyribose-phosphate aldolase 1 (220 aa).

Asp89 serves as the catalytic Proton donor/acceptor. The Schiff-base intermediate with acetaldehyde role is filled by Lys151. The active-site Proton donor/acceptor is Lys180.

It belongs to the DeoC/FbaB aldolase family. DeoC type 1 subfamily.

The protein localises to the cytoplasm. It carries out the reaction 2-deoxy-D-ribose 5-phosphate = D-glyceraldehyde 3-phosphate + acetaldehyde. It participates in carbohydrate degradation; 2-deoxy-D-ribose 1-phosphate degradation; D-glyceraldehyde 3-phosphate and acetaldehyde from 2-deoxy-alpha-D-ribose 1-phosphate: step 2/2. Its function is as follows. Catalyzes a reversible aldol reaction between acetaldehyde and D-glyceraldehyde 3-phosphate to generate 2-deoxy-D-ribose 5-phosphate. This chain is Deoxyribose-phosphate aldolase 1, found in Mesoplasma florum (strain ATCC 33453 / NBRC 100688 / NCTC 11704 / L1) (Acholeplasma florum).